We begin with the raw amino-acid sequence, 226 residues long: Ribonuclease 3 (226 aa).

In terms of domain architecture, RNase III spans Ile-6–Asp-128. Glu-41 is a Mg(2+) binding site. Residue Asp-45 is part of the active site. Residues Asp-114 and Glu-117 each contribute to the Mg(2+) site. Glu-117 is a catalytic residue. The 71-residue stretch at Asp-155 to Leu-225 folds into the DRBM domain.

This sequence belongs to the ribonuclease III family. Homodimer. The cofactor is Mg(2+).

Its subcellular location is the cytoplasm. The enzyme catalyses Endonucleolytic cleavage to 5'-phosphomonoester.. Digests double-stranded RNA. Involved in the processing of primary rRNA transcript to yield the immediate precursors to the large and small rRNAs (23S and 16S). Processes some mRNAs, and tRNAs when they are encoded in the rRNA operon. Processes pre-crRNA and tracrRNA of type II CRISPR loci if present in the organism. This chain is Ribonuclease 3, found in Enterobacter sp. (strain 638).